A 77-amino-acid chain; its full sequence is Translation initiation factor IF-1, chloroplastic (77 aa).

An S1-like domain is found at 1–71 (MKEQKLIHEG…TRGRIIYRLR (71 aa)).

The protein belongs to the IF-1 family. As to quaternary structure, component of the 30S ribosomal translation pre-initiation complex which assembles on the 30S ribosome in the order IF-2 and IF-3, IF-1 and N-formylmethionyl-tRNA(fMet); mRNA recruitment can occur at any time during PIC assembly.

The protein resides in the plastid. It localises to the chloroplast. Functionally, one of the essential components for the initiation of protein synthesis. Stabilizes the binding of IF-2 and IF-3 on the 30S subunit to which N-formylmethionyl-tRNA(fMet) subsequently binds. Helps modulate mRNA selection, yielding the 30S pre-initiation complex (PIC). Upon addition of the 50S ribosomal subunit IF-1, IF-2 and IF-3 are released leaving the mature 70S translation initiation complex. The sequence is that of Translation initiation factor IF-1, chloroplastic from Acorus calamus var. americanus (American sweet flag).